The primary structure comprises 505 residues: Serine/threonine-protein kinase D (505 aa).

The Protein kinase domain maps to 9 to 271 (YEIVKSLGSG…AMYQALHSLI (263 aa)). ATP-binding positions include 15-23 (LGSGGFGDT) and Lys40. Catalysis depends on Asp136, which acts as the Proton acceptor. The 70-residue stretch at 436–505 (GASATIGGIP…GWIASQLVNF (70 aa)) folds into the SH3b domain.

Belongs to the protein kinase superfamily. Ser/Thr protein kinase family.

It carries out the reaction L-seryl-[protein] + ATP = O-phospho-L-seryl-[protein] + ADP + H(+). The enzyme catalyses L-threonyl-[protein] + ATP = O-phospho-L-threonyl-[protein] + ADP + H(+). The chain is Serine/threonine-protein kinase D (spkD) from Synechocystis sp. (strain ATCC 27184 / PCC 6803 / Kazusa).